The chain runs to 288 residues: 4-diphosphocytidyl-2-C-methyl-D-erythritol kinase (288 aa).

Residue Lys-8 is part of the active site. 90-100 lines the ATP pocket; it reads PFGAGLGGGSS. Asp-132 is a catalytic residue.

The protein belongs to the GHMP kinase family. IspE subfamily.

It carries out the reaction 4-CDP-2-C-methyl-D-erythritol + ATP = 4-CDP-2-C-methyl-D-erythritol 2-phosphate + ADP + H(+). The protein operates within isoprenoid biosynthesis; isopentenyl diphosphate biosynthesis via DXP pathway; isopentenyl diphosphate from 1-deoxy-D-xylulose 5-phosphate: step 3/6. Catalyzes the phosphorylation of the position 2 hydroxy group of 4-diphosphocytidyl-2C-methyl-D-erythritol. This Chlorobium chlorochromatii (strain CaD3) protein is 4-diphosphocytidyl-2-C-methyl-D-erythritol kinase.